The chain runs to 135 residues: Large ribosomal subunit protein mL54 (135 aa).

Belongs to the mitochondrion-specific ribosomal protein mL54 family. Component of the mitochondrial ribosome large subunit (39S) which comprises a 16S rRNA and about 50 distinct proteins.

It is found in the mitochondrion. This Danio rerio (Zebrafish) protein is Large ribosomal subunit protein mL54 (mrpl54).